A 304-amino-acid chain; its full sequence is D-alanine--D-alanine ligase (304 aa).

The ATP-grasp domain occupies K103–E301. V132 to T187 contacts ATP. 3 residues coordinate Mg(2+): D254, E268, and N270.

Belongs to the D-alanine--D-alanine ligase family. Mg(2+) is required as a cofactor. Requires Mn(2+) as cofactor.

The protein localises to the cytoplasm. The catalysed reaction is 2 D-alanine + ATP = D-alanyl-D-alanine + ADP + phosphate + H(+). It functions in the pathway cell wall biogenesis; peptidoglycan biosynthesis. Cell wall formation. The chain is D-alanine--D-alanine ligase from Xylella fastidiosa (strain Temecula1 / ATCC 700964).